The sequence spans 596 residues: Germinal center kinase 3 (596 aa).

Residues 1–54 (MSSSNLAGNTNTTTTSSAASAAAAHSAANASTITSEYSTTQTTTGTFNTDTLSS) are compositionally biased toward low complexity. The tract at residues 1–80 (MSSSNLAGNT…PPPPPQVSSP (80 aa)) is disordered. A phosphothreonine; by autocatalysis mark is found at Thr-13 and Thr-32. Over residues 67-77 (SQPPPPPPPQV) the composition is skewed to pro residues. The Protein kinase domain occupies 108–386 (YKLDESIGVG…ASELLKYSFF (279 aa)). ATP-binding positions include 114-122 (IGVGATATV) and Lys-137. Position 190 is a phosphoserine; by autocatalysis (Ser-190). The active-site Proton acceptor is the Asp-240. A Phosphothreonine modification is found at Thr-280. A Phosphoserine; by autocatalysis modification is found at Ser-405. At Ser-419 the chain carries Phosphoserine. The interval 429-496 (NWEFEYDSPQ…EGGGATTPCP (68 aa)) is disordered. The span at 432-450 (FEYDSPQESDDDSDLEDEE) shows a compositional bias: acidic residues. The span at 466-479 (GAAGAAGGATGGAA) shows a compositional bias: gly residues.

This sequence belongs to the protein kinase superfamily. STE Ser/Thr protein kinase family. STE20 subfamily. Interacts (via C-terminus) with clh-3; required for the phosphorylation-mediated inhibition of clh-3 function. Interacts (via C-terminus) with wnk-1; the interaction is direct. Phosphorylated at Thr-280 and Ser-419 probably by wnk-1; phosphorylation results in weak activation. Predominantly autophosphorylated at Thr-32 and Ser-190 and weakly autophosphorylated at Thr-13 and Ser-405 in vitro. In terms of tissue distribution, ubiquitously expressed with a higher expression in the excretory cell. Expressed in both male and female germ cells; up-regulated in maturing spermatocytes but absent in mature sperm.

Its subcellular location is the cytoplasm. The protein resides in the nucleus. The enzyme catalyses L-seryl-[protein] + ATP = O-phospho-L-seryl-[protein] + ADP + H(+). It carries out the reaction L-threonyl-[protein] + ATP = O-phospho-L-threonyl-[protein] + ADP + H(+). In terms of biological role, plays a role in osmotic stress responses by regulating ion homeostasis and by controlling cell volume via the phosphorylation-mediated inhibition of the chloride channel clh-3. In addition, increases gpdh-1 translation upon osmotic stress, likely downstream of wnk-1. Involved in several developmental processes including the tubular formation of the excretory canals, the formation of the intestine and the progression through larval stages. In addition, required for germ line development by controlling meiosis and chromosomal segregation during spermatogenesis. By controlling clh-3 activity, may regulate the development of the excretory canals and fertility. This chain is Germinal center kinase 3, found in Caenorhabditis elegans.